The chain runs to 367 residues: MKNEYLLLTPGPLSTSETVREAMLKDWCTWDDEYNKDIVEVIRTKLVKLATQQDGYTSVLMQGSGTASVEATIGSAIAKEGKLLVVDNGAYGARIAQIADYLNIPCHVVSPGETSQPHLNEVETALASDPAITHVAIVHCETTTGMLNPIEAFASVAKAHGKVVILDAMSSFGGIPIDIAELGIDFMISSANKCIQGVPGFGFVIAKQTELEKCQGQARSLSLDLYDQWHCMEVNHGKWRFTSPTHTVRAFYQALLELEQEGGIEARHNRYQTNQKTLVAGMRSLGFEPLLNDELHSPIITSFYSPTHSDYQFKAFYTRLKEQGFVIYPGKVSNADCFRIGNIGEVYPADIERLIGAIEKAMYWQVA.

Lysine 193 bears the N6-(pyridoxal phosphate)lysine mark.

It belongs to the class-V pyridoxal-phosphate-dependent aminotransferase family. PhnW subfamily. Homodimer. It depends on pyridoxal 5'-phosphate as a cofactor.

The enzyme catalyses (2-aminoethyl)phosphonate + pyruvate = phosphonoacetaldehyde + L-alanine. Involved in phosphonate degradation. This chain is 2-aminoethylphosphonate--pyruvate transaminase, found in Vibrio vulnificus (strain CMCP6).